Reading from the N-terminus, the 27-residue chain is Flagellar filament 34 kDa core protein (27 aa).

It belongs to the bacterial flagellin family. The flagellum consists of an outer layer composed of repeating units of FlaA around a core that contains one or all of five antigenically related polypeptides.

The protein localises to the periplasmic flagellum. Its subcellular location is the periplasm. Its function is as follows. Component of the core of the flagella. This chain is Flagellar filament 34 kDa core protein, found in Spirochaeta aurantia.